We begin with the raw amino-acid sequence, 623 residues long: ATP-dependent zinc metalloprotease FtsH (623 aa).

At 1–7 (MNQSFWR) the chain is on the cytoplasmic side. Residues 8 to 28 (PLFAILLFMLVFHLTNIFFAQ) form a helical membrane-spanning segment. The Periplasmic segment spans residues 29-117 (QGAQVAQISY…EVSALSTETP (89 aa)). The helical transmembrane segment at 118–138 (LLLNALIYVAPWVILIAIWWV) threads the bilayer. The Cytoplasmic portion of the chain corresponds to 139–623 (GMRSMRSQGP…SLNTAQAPPP (485 aa)). 214-221 (GPPGTGKT) lines the ATP pocket. His435 provides a ligand contact to Zn(2+). Glu436 is a catalytic residue. His439 and Asp511 together coordinate Zn(2+).

In the central section; belongs to the AAA ATPase family. The protein in the C-terminal section; belongs to the peptidase M41 family. As to quaternary structure, homohexamer. It depends on Zn(2+) as a cofactor.

Its subcellular location is the cell inner membrane. Acts as a processive, ATP-dependent zinc metallopeptidase for both cytoplasmic and membrane proteins. Plays a role in the quality control of integral membrane proteins. In Pelobacter propionicus (strain DSM 2379 / NBRC 103807 / OttBd1), this protein is ATP-dependent zinc metalloprotease FtsH.